A 421-amino-acid chain; its full sequence is UDP-N-acetylglucosamine 1-carboxyvinyltransferase 2 (421 aa).

22-23 (KN) contributes to the phosphoenolpyruvate binding site. Arg95 serves as a coordination point for UDP-N-acetyl-alpha-D-glucosamine. Cys119 (proton donor) is an active-site residue. Cys119 carries the post-translational modification 2-(S-cysteinyl)pyruvic acid O-phosphothioketal. UDP-N-acetyl-alpha-D-glucosamine contacts are provided by residues 124 to 128 (RPIEQ), Asp308, and Val330.

The protein belongs to the EPSP synthase family. MurA subfamily.

Its subcellular location is the cytoplasm. It carries out the reaction phosphoenolpyruvate + UDP-N-acetyl-alpha-D-glucosamine = UDP-N-acetyl-3-O-(1-carboxyvinyl)-alpha-D-glucosamine + phosphate. It functions in the pathway cell wall biogenesis; peptidoglycan biosynthesis. Cell wall formation. Adds enolpyruvyl to UDP-N-acetylglucosamine. This is UDP-N-acetylglucosamine 1-carboxyvinyltransferase 2 from Staphylococcus saprophyticus subsp. saprophyticus (strain ATCC 15305 / DSM 20229 / NCIMB 8711 / NCTC 7292 / S-41).